The sequence spans 944 residues: UvrABC system protein A (944 aa).

31-38 (GLSGSGKS) contributes to the ATP binding site. A C4-type zinc finger spans residues 253-280 (CPVCGHAISELEPKLFSFNNPAGACPTC). ABC transporter domains follow at residues 309 to 586 (WDRR…PDSL) and 606 to 936 (RNKK…HYLK). Residue 639–646 (GVSGSGKS) participates in ATP binding. Residues 739–765 (CEACQGDGLIKVEMHFLPDIYVPCDVC) form a C4-type zinc finger.

Belongs to the ABC transporter superfamily. UvrA family. As to quaternary structure, forms a heterotetramer with UvrB during the search for lesions.

It localises to the cytoplasm. In terms of biological role, the UvrABC repair system catalyzes the recognition and processing of DNA lesions. UvrA is an ATPase and a DNA-binding protein. A damage recognition complex composed of 2 UvrA and 2 UvrB subunits scans DNA for abnormalities. When the presence of a lesion has been verified by UvrB, the UvrA molecules dissociate. The sequence is that of UvrABC system protein A from Pseudomonas putida (strain ATCC 47054 / DSM 6125 / CFBP 8728 / NCIMB 11950 / KT2440).